The primary structure comprises 181 residues: Large ribosomal subunit protein uL6 (181 aa).

This sequence belongs to the universal ribosomal protein uL6 family. Part of the 50S ribosomal subunit.

Its function is as follows. This protein binds to the 23S rRNA, and is important in its secondary structure. It is located near the subunit interface in the base of the L7/L12 stalk, and near the tRNA binding site of the peptidyltransferase center. In Synechococcus sp. (strain JA-3-3Ab) (Cyanobacteria bacterium Yellowstone A-Prime), this protein is Large ribosomal subunit protein uL6.